Here is a 1036-residue protein sequence, read N- to C-terminus: Serine/threonine-protein kinase ULK2 (1036 aa).

Positions 9-271 constitute a Protein kinase domain; sequence YSKRDLVGHG…FEAFFSHPFL (263 aa). ATP is bound by residues 15-23 and lysine 39; that span reads VGHGAFAVV. Aspartate 131 (proton acceptor) is an active-site residue. Disordered stretches follow at residues 319 to 348, 418 to 460, 491 to 522, 540 to 588, and 656 to 695; these read ENLS…NSSC, TSTA…ADTA, CCCG…SLLS, QKLR…SSDW, and AEQQ…LNTE. Positions 335 to 348 are enriched in low complexity; sequence SKDSASTSSKNSSC. Over residues 418–428 the composition is skewed to polar residues; that stretch reads TSTASSGTNVH. Residue serine 430 is modified to Phosphoserine. Positions 504 to 521 are enriched in polar residues; sequence RNSSGSPVPQAQSPQSLL. A compositionally biased stretch (polar residues) spans 659–679; that stretch reads QSKAVFGRSVSTGKLSDQQGK. A phosphoserine mark is found at serine 771 and serine 780. Residues 812-1036 are CTD-like region; the sequence is ELPEETLMER…SALCHSTATV (225 aa).

Belongs to the protein kinase superfamily. Ser/Thr protein kinase family. APG1/unc-51/ULK1 subfamily. Interacts with SYNGAP1. Component of a complex consisting of ATG13/KIAA0652, ULK1 and RB1CC1/FIP200. Interacts (via C-terminus) with ATG13/KIAA0652. Associates with the mammalian target of rapamycin complex 1 (mTORC1) through an interaction with RPTOR. Post-translationally, autophosphorylated. In response to nutrient limitation, probably phosphorylated and activated by AMPK, leading to activate autophagy.

The protein localises to the cytoplasmic vesicle membrane. The catalysed reaction is L-seryl-[protein] + ATP = O-phospho-L-seryl-[protein] + ADP + H(+). The enzyme catalyses L-threonyl-[protein] + ATP = O-phospho-L-threonyl-[protein] + ADP + H(+). Serine/threonine-protein kinase involved in autophagy in response to starvation. Acts upstream of phosphatidylinositol 3-kinase PIK3C3 to regulate the formation of autophagophores, the precursors of autophagosomes. Part of regulatory feedback loops in autophagy: acts both as a downstream effector and a negative regulator of mammalian target of rapamycin complex 1 (mTORC1) via interaction with RPTOR. Activated via phosphorylation by AMPK, also acts as a negative regulator of AMPK through phosphorylation of the AMPK subunits PRKAA1, PRKAB2 and PRKAG1. May phosphorylate ATG13/KIAA0652, FRS2, FRS3 and RPTOR; however such data need additional evidences. Not involved in ammonia-induced autophagy or in autophagic response of cerebellar granule neurons (CGN) to low potassium concentration. Plays a role early in neuronal differentiation and is required for granule cell axon formation: may govern axon formation via Ras-like GTPase signaling and through regulation of the Rab5-mediated endocytic pathways within developing axons. In Homo sapiens (Human), this protein is Serine/threonine-protein kinase ULK2 (ULK2).